A 116-amino-acid chain; its full sequence is uncharacterized protein (116 aa).

One can recognise an N-acetylmuramoyl-L-alanine amidase domain in the interval 2–73; sequence DGSVGTGRQV…PKALICGHRD (72 aa).

The protein to phage T3 and T7 N-acetylmuramoyl-L-alanine amidases.

This is an uncharacterized protein from Haemophilus influenzae (strain ATCC 51907 / DSM 11121 / KW20 / Rd).